The following is a 677-amino-acid chain: uncharacterized protein (677 aa).

3 helical membrane passes run 80–102, 338–360, and 367–386; these read ILSL…RASF, ALLS…LFGF, and LVAM…LLSL. A disordered region spans residues 523 to 556; it reads DEAASLPSDSSPEEDLDPLEEVESIEGTAEESTR. Acidic residues predominate over residues 533 to 546; sequence SPEEDLDPLEEVES.

It is found in the cell membrane. This is an uncharacterized protein from Treponema pallidum (strain Nichols).